Here is a 201-residue protein sequence, read N- to C-terminus: Peptide deformylase (201 aa).

Fe cation is bound by residues C121 and H163. E164 is an active-site residue. H167 lines the Fe cation pocket.

The protein belongs to the polypeptide deformylase family. It depends on Fe(2+) as a cofactor.

The enzyme catalyses N-terminal N-formyl-L-methionyl-[peptide] + H2O = N-terminal L-methionyl-[peptide] + formate. In terms of biological role, removes the formyl group from the N-terminal Met of newly synthesized proteins. Requires at least a dipeptide for an efficient rate of reaction. N-terminal L-methionine is a prerequisite for activity but the enzyme has broad specificity at other positions. This chain is Peptide deformylase, found in Synechococcus sp. (strain CC9605).